The following is a 339-amino-acid chain: Adenylosuccinate synthetase (339 aa).

GTP contacts are provided by residues 12–18 (GDEGKGS) and 42–44 (GHS). Catalysis depends on Asp-13, which acts as the Proton acceptor. Residues Asp-13 and Gly-42 each coordinate Mg(2+). IMP contacts are provided by residues 13-16 (DEGK), 40-43 (NAGH), Thr-127, Arg-141, Gln-179, Thr-194, and Arg-256. His-43 acts as the Proton donor in catalysis. 252–258 (TVTGRRR) is a substrate binding site. GTP-binding positions include Arg-258, 284–286 (MLD), and 324–326 (KTG).

Belongs to the adenylosuccinate synthetase family. Homodimer. The cofactor is Mg(2+).

Its subcellular location is the cytoplasm. The enzyme catalyses IMP + L-aspartate + GTP = N(6)-(1,2-dicarboxyethyl)-AMP + GDP + phosphate + 2 H(+). It participates in purine metabolism; AMP biosynthesis via de novo pathway; AMP from IMP: step 1/2. In terms of biological role, plays an important role in the de novo pathway of purine nucleotide biosynthesis. Catalyzes the first committed step in the biosynthesis of AMP from IMP. The sequence is that of Adenylosuccinate synthetase from Pyrococcus horikoshii (strain ATCC 700860 / DSM 12428 / JCM 9974 / NBRC 100139 / OT-3).